Consider the following 471-residue polypeptide: Light-independent protochlorophyllide reductase subunit N (471 aa).

The [4Fe-4S] cluster site is built by Cys22, Cys47, and Cys107.

This sequence belongs to the BchN/ChlN family. In terms of assembly, protochlorophyllide reductase is composed of three subunits; ChlL, ChlN and ChlB. Forms a heterotetramer of two ChlB and two ChlN subunits. Requires [4Fe-4S] cluster as cofactor.

It is found in the plastid. It localises to the chloroplast. The enzyme catalyses chlorophyllide a + oxidized 2[4Fe-4S]-[ferredoxin] + 2 ADP + 2 phosphate = protochlorophyllide a + reduced 2[4Fe-4S]-[ferredoxin] + 2 ATP + 2 H2O. It functions in the pathway porphyrin-containing compound metabolism; chlorophyll biosynthesis (light-independent). Component of the dark-operative protochlorophyllide reductase (DPOR) that uses Mg-ATP and reduced ferredoxin to reduce ring D of protochlorophyllide (Pchlide) to form chlorophyllide a (Chlide). This reaction is light-independent. The NB-protein (ChlN-ChlB) is the catalytic component of the complex. In Huperzia lucidula (Shining clubmoss), this protein is Light-independent protochlorophyllide reductase subunit N.